Consider the following 475-residue polypeptide: Aspartyl/glutamyl-tRNA(Asn/Gln) amidotransferase subunit B (475 aa).

It belongs to the GatB/GatE family. GatB subfamily. Heterotrimer of A, B and C subunits.

The enzyme catalyses L-glutamyl-tRNA(Gln) + L-glutamine + ATP + H2O = L-glutaminyl-tRNA(Gln) + L-glutamate + ADP + phosphate + H(+). The catalysed reaction is L-aspartyl-tRNA(Asn) + L-glutamine + ATP + H2O = L-asparaginyl-tRNA(Asn) + L-glutamate + ADP + phosphate + 2 H(+). In terms of biological role, allows the formation of correctly charged Asn-tRNA(Asn) or Gln-tRNA(Gln) through the transamidation of misacylated Asp-tRNA(Asn) or Glu-tRNA(Gln) in organisms which lack either or both of asparaginyl-tRNA or glutaminyl-tRNA synthetases. The reaction takes place in the presence of glutamine and ATP through an activated phospho-Asp-tRNA(Asn) or phospho-Glu-tRNA(Gln). This is Aspartyl/glutamyl-tRNA(Asn/Gln) amidotransferase subunit B from Bacillus thuringiensis subsp. konkukian (strain 97-27).